The following is an 882-amino-acid chain: E3 ubiquitin-protein ligase SH3RF3 (882 aa).

The interval A18–A42 is disordered. Residues C57 to R98 form an RING-type zinc finger. The interval R124–S159 is disordered. 2 SH3 domains span residues C194–P253 and H256–S319. A disordered region spans residues R368–H399. The segment at R369 to A439 is interaction with RAC1. At S400 the chain carries Phosphoserine. Polar residues predominate over residues Q433–T444. The tract at residues Q433–T458 is disordered. One can recognise an SH3 3 domain in the interval L464 to R525. Composition is skewed to polar residues over residues P575–T588, A596–S635, and L697–G706. 2 disordered regions span residues P575–P664 and P693–D747. Residues K708–S721 show a composition bias toward basic and acidic residues. S797 is subject to Phosphoserine. The SH3 4 domain maps to L823–F882.

The protein belongs to the SH3RF family. Interacts (via SH3 domain 3) with PAK2. Interacts with RAC1 (GTP-bound form). Autoubiquitinated.

It carries out the reaction S-ubiquitinyl-[E2 ubiquitin-conjugating enzyme]-L-cysteine + [acceptor protein]-L-lysine = [E2 ubiquitin-conjugating enzyme]-L-cysteine + N(6)-ubiquitinyl-[acceptor protein]-L-lysine.. It functions in the pathway protein modification; protein ubiquitination. Has E3 ubiquitin-protein ligase activity. This chain is E3 ubiquitin-protein ligase SH3RF3 (SH3RF3), found in Homo sapiens (Human).